The sequence spans 332 residues: Ribose operon repressor (332 aa).

Residues 2–56 (ATMKDIARLAQVSTSTVSHVINGSRFVSDEIREKVMRIVAELNYTPSAVARSLKV) enclose the HTH lacI-type domain. Positions 4–23 (MKDIARLAQVSTSTVSHVIN) form a DNA-binding region, H-T-H motif.

Functionally, transcriptional repressor for the ribose rbsDACBK operon. This chain is Ribose operon repressor (rbsR), found in Haemophilus influenzae (strain ATCC 51907 / DSM 11121 / KW20 / Rd).